A 560-amino-acid polypeptide reads, in one-letter code: Light-independent protochlorophyllide reductase subunit N (560 aa).

Residues Cys24, Cys49, and Cys109 each coordinate [4Fe-4S] cluster. Positions Asn173–Ser182 are enriched in low complexity. Positions Asn173–Lys210 are disordered. Residues Phe196 to Phe206 are compositionally biased toward polar residues.

The protein belongs to the BchN/ChlN family. As to quaternary structure, protochlorophyllide reductase is composed of three subunits; ChlL, ChlN and ChlB. Forms a heterotetramer of two ChlB and two ChlN subunits. The cofactor is [4Fe-4S] cluster.

It localises to the plastid. It is found in the chloroplast. The enzyme catalyses chlorophyllide a + oxidized 2[4Fe-4S]-[ferredoxin] + 2 ADP + 2 phosphate = protochlorophyllide a + reduced 2[4Fe-4S]-[ferredoxin] + 2 ATP + 2 H2O. Its pathway is porphyrin-containing compound metabolism; chlorophyll biosynthesis (light-independent). Its function is as follows. Component of the dark-operative protochlorophyllide reductase (DPOR) that uses Mg-ATP and reduced ferredoxin to reduce ring D of protochlorophyllide (Pchlide) to form chlorophyllide a (Chlide). This reaction is light-independent. The NB-protein (ChlN-ChlB) is the catalytic component of the complex. This is Light-independent protochlorophyllide reductase subunit N from Tetradesmus obliquus (Green alga).